The chain runs to 426 residues: Cuticle-degrading serine protease (426 aa).

An N-terminal signal peptide occupies residues 1–21 (MLTNGLISLLAIAGLATNAFA). Positions 22 to 123 (GPIRKVSNAG…VEQDTVVTTY (102 aa)) are excised as a propeptide. In terms of domain architecture, Inhibitor I9 spans 39–122 (KYIVVLKKGL…YVEQDTVVTT (84 aa)). Residues 130 to 426 (TWGLDRISHE…TNHQVTIVAS (297 aa)) enclose the Peptidase S8 domain. D164 (charge relay system) is an active-site residue. The N-linked (GlcNAc...) asparagine glycan is linked to N178. H200 acts as the Charge relay system in catalysis. N-linked (GlcNAc...) asparagine glycosylation occurs at N252. S353 functions as the Charge relay system in the catalytic mechanism.

The protein belongs to the peptidase S8 family.

The protein localises to the secreted. Inhibited by PMSF, SSI, the peptide Phe-Val and by Phe, but not by EDTA. Hydrolyzes gelatin, casein, the chromogenic substrate azocoll and the cuticle of the nematode P.redivivus. Immobilizes P.redivivus. This is Cuticle-degrading serine protease from Orbilia oligospora (Nematode-trapping fungus).